A 94-amino-acid chain; its full sequence is Selenoprotein K (94 aa).

A helical transmembrane segment spans residues 20 to 42 (LSFLTDFFWGAVEFIGLFFQTLV). Positions 48–94 (KDGNNSASSRFSDGRGPPGFPGRRRMGRINHGAGPTPPPMGGGGUGR) are disordered. The segment covering 49–58 (DGNNSASSRF) has biased composition (polar residues). Position 92 (Sec-92) is a non-standard amino acid, selenocysteine.

The protein belongs to the selenoprotein K family.

It localises to the endoplasmic reticulum membrane. Its subcellular location is the cell membrane. Required for Ca(2+) flux in immune cells and plays a role in T-cell proliferation and in T-cell and neutrophil migration. Involved in endoplasmic reticulum-associated degradation (ERAD) of soluble glycosylated proteins. Required for cell surface expression of CD36 and involved in macrophage uptake of low-density lipoprotein and in foam cell formation. Required for palmitoylation. This chain is Selenoprotein K (selenok), found in Danio rerio (Zebrafish).